Reading from the N-terminus, the 577-residue chain is Arginine--tRNA ligase (577 aa).

A 'HIGH' region motif is present at residues 122–132; sequence PNVAKEMHVGH.

The protein belongs to the class-I aminoacyl-tRNA synthetase family. As to quaternary structure, monomer.

The protein localises to the cytoplasm. It carries out the reaction tRNA(Arg) + L-arginine + ATP = L-arginyl-tRNA(Arg) + AMP + diphosphate. The protein is Arginine--tRNA ligase of Aliivibrio fischeri (strain MJ11) (Vibrio fischeri).